The primary structure comprises 32 residues: Ribulose bisphosphate carboxylase/oxygenase activase, chloroplastic (32 aa).

The tract at residues 13–32 is disordered; sequence FGALREGPPTFEQPAMTIEK.

It belongs to the RuBisCO activase family.

Its subcellular location is the plastid. It localises to the chloroplast stroma. Its function is as follows. Activation of RuBisCO (ribulose-1,5-bisphosphate carboxylase/oxygenase; EC 4.1.1.39) involves the ATP-dependent carboxylation of the epsilon-amino group of lysine leading to a carbamate structure. This is Ribulose bisphosphate carboxylase/oxygenase activase, chloroplastic from Populus euphratica (Euphrates poplar).